A 145-amino-acid chain; its full sequence is Protein BUD31 homolog 3 (145 aa).

Belongs to the BUD31 (G10) family.

The protein resides in the nucleus. This chain is Protein BUD31 homolog 3, found in Oryza sativa subsp. japonica (Rice).